We begin with the raw amino-acid sequence, 841 residues long: Copper-transporting P-type ATPase (841 aa).

6 consecutive transmembrane segments (helical) span residues 186-206, 218-238, 256-276, 285-305, 445-465, and 474-494; these read LWVS…PMLG, ATFI…LPFF, IGLG…APGI, GAAV…VFVG, AVFV…WAAI, and GLLA…GLAT. The active-site 4-aspartylphosphate intermediate is Asp-530. 2 helical membrane passes run 602 to 622 and 638 to 658; these read GIAD…DLGI and GKTV…AVAD. Mg(2+) is bound by residues Asp-729 and Asp-733. A run of 2 helical transmembrane segments spans residues 742-762 and 800-820; these read VGIA…ITLV and VAAG…IAAA.

Belongs to the cation transport ATPase (P-type) (TC 3.A.3) family. Type IB subfamily.

It is found in the cell membrane. It catalyses the reaction Cu(2+)(in) + ATP + H2O = Cu(2+)(out) + ADP + phosphate + H(+). Involved in copper efflux. This Rhizobium leguminosarum bv. viciae protein is Copper-transporting P-type ATPase (actP).